Here is a 29-residue protein sequence, read N- to C-terminus: Cycloviolacin-H2 (29 aa).

The cyclopeptide (Ser-Asn) cross-link spans 1 to 29; that stretch reads SAIACGESCVYIPCFIPGCSCRNRVCYLN. 3 disulfides stabilise this stretch: Cys-5/Cys-19, Cys-9/Cys-21, and Cys-14/Cys-26.

This is a cyclic peptide.

Probably participates in a plant defense mechanism. This chain is Cycloviolacin-H2, found in Viola hederacea (Australian violet).